The sequence spans 190 residues: Glutathione peroxidase 2 (190 aa).

Selenocysteine 40 is a catalytic residue. A non-standard amino acid (selenocysteine) is located at residue selenocysteine 40.

This sequence belongs to the glutathione peroxidase family. As to quaternary structure, homotetramer. In terms of tissue distribution, mucosal epithelium of the gastrointestinal tract.

It is found in the cytoplasm. Its subcellular location is the cytosol. The catalysed reaction is 2 glutathione + H2O2 = glutathione disulfide + 2 H2O. It carries out the reaction a hydroperoxy polyunsaturated fatty acid + 2 glutathione = a hydroxy polyunsaturated fatty acid + glutathione disulfide + H2O. It catalyses the reaction tert-butyl hydroperoxide + 2 glutathione = tert-butanol + glutathione disulfide + H2O. The enzyme catalyses cumene hydroperoxide + 2 glutathione = 2-phenylpropan-2-ol + glutathione disulfide + H2O. The catalysed reaction is (13S)-hydroperoxy-(9Z,11E)-octadecadienoate + 2 glutathione = (13S)-hydroxy-(9Z,11E)-octadecadienoate + glutathione disulfide + H2O. It carries out the reaction (5S)-hydroperoxy-(6E,8Z,11Z,14Z)-eicosatetraenoate + 2 glutathione = (5S)-hydroxy-(6E,8Z,11Z,14Z)-eicosatetraenoate + glutathione disulfide + H2O. It catalyses the reaction (12R)-hydroperoxy-(5Z,8Z,10E,14Z)-eicosatetraenoate + 2 glutathione = (12R)-hydroxy-(5Z,8Z,10E,14Z)-eicosatetraenoate + glutathione disulfide + H2O. The enzyme catalyses (15S)-hydroperoxy-(5Z,8Z,11Z,13E)-eicosatetraenoate + 2 glutathione = (15S)-hydroxy-(5Z,8Z,11Z,13E)-eicosatetraenoate + glutathione disulfide + H2O. Catalyzes the reduction of hydroperoxides in a glutathione-dependent manner thus regulating cellular redox homeostasis. Can reduce small soluble hydroperoxide such as H2O2. Can reduce cumene hydroperoxide and tert-butyl hydroperoxide, as well as several fatty acid-derived hydroperoxides. Cannot reduce phosphatidycholine hydroperoxide. The sequence is that of Glutathione peroxidase 2 (Gpx2) from Rattus norvegicus (Rat).